The primary structure comprises 1296 residues: MPFVNKQFNYKDPVNGVDIAYIKIPNVGQMQPVKAFKIHNKIWVIPERDTFTNPEEGDLNPPPEAKQVPVSYYDSTYLSTDNEKDNYLKGVTKLFERIYSTDLGRMLLTSIVRGIPFWGGSTIDTELKVIDTNCINVIQPDGSYRSEELNLVIIGPSADIIQFECKSFGHEVLNLTRNGYGSTQYIRFSPDFTFGFEESLEVDTNPLLGAGKFATDPAVTLAHELIHAGHRLYGIAINPNRVFKVNTNAYYEMSGLEVSFEELRTFGGHDAKFIDSLQENEFRLYYYNKFKDIASTLNKAKSIVGTTASLQYMKNVFKEKYLLSEDTSGKFSVDKLKFDKLYKMLTEIYTEDNFVKFFKVLNRKTYLNFDKAVFKINIVPKVNYTIYDGFNLRNTNLAANFNGQNTEINNMNFTKLKNFTGLFEFYKLLCVRGIITSKTKSLDKGYNKALNDLCIKVNNWDLFFSPSEDNFTNDLNKGEEITSDTNIEAAEENISLDLIQQYYLTFNFDNEPENISIENLSSDIIGQLELMPNIERFPNGKKYELDKYTMFHYLRAQEFEHGKSRIALTNSVNEALLNPSRVYTFFSSDYVKKVNKATEAAMFLGWVEQLVYDFTDETSEVSTTDKIADITIIIPYIGPALNIGNMLYKDDFVGALIFSGAVILLEFIPEIAIPVLGTFALVSYIANKVLTVQTIDNALSKRNEKWDEVYKYIVTNWLAKVNTQIDLIRKKMKEALENQAEATKAIINYQYNQYTEEEKNNINFNIDDLSSKLNESINKAMININKFLNQCSVSYLMNSMIPYGVKRLEDFDASLKDALLKYIYDNRGTLIGQVDRLKDKVNNTLSTDIPFQLSKYVDNQRLLSTFTEYIKNIINTSILNLRYESNHLIDLSRYASKINIGSKVNFDPIDKNQIQLFNLESSKIEVILKNAIVYNSMYENFSTSFWIRIPKYFNSISLNNEYTIINCMENNSGWKVSLNYGEIIWTLQDTQEIKQRVVFKYSQMINISDYINRWIFVTITNNRLNNSKIYINGRLIDQKPISNLGNIHASNNIMFKLDGCRDTHRYIWIKYFNLFDKELNEKEIKDLYDNQSNSGILKDFWGDYLQYDKPYYMLNLYDPNKYVDVNNVGIRGYMYLKGPRGSVMTTNIYLNSSLYRGTKFIIKKYASGNKDNIVRNNDRVYINVVVKNKEYRLATNASQAGVEKILSALEIPDVGNLSQVVVMKSKNDQGITNKCKMNLQDNNGNDIGFIGFHQFNNIAKLVASNWYNRQIERSSRTLGCSWEFIPVDDGWGERPL.

His223 is a Zn(2+) binding site. The Proton acceptor role is filled by Glu224. The Zn(2+) site is built by His227 and Glu262. A disulfide bridge links Cys430 with Cys454. A translocation domain (TD); not required to bind NTNHA region spans residues 449–870; the sequence is ALNDLCIKVN…RLLSTFTEYI (422 aa). Residues 492 to 545 are belt; not required for channel formation; the sequence is ENISLDLIQQYYLTFNFDNEPENISIENLSSDIIGQLELMPNIERFPNGKKYEL. The next 2 membrane-spanning stretches (helical) occupy residues 627-647 and 656-676; these read IADITIIIPYIGPALNIGNML and LIFSGAVILLEFIPEIAIPVL. An N-terminus of receptor binding domain (N-RBD) region spans residues 871–1092; the sequence is KNIINTSILN…EIKDLYDNQS (222 aa). The segment at 1093-1296 is C-terminus of receptor binding domain (C-RBD); sequence NSGILKDFWG…VDDGWGERPL (204 aa). The a ganglioside GT1b (d18:1(4E)) site is built by Tyr1117 and Glu1203. A disulfide bridge links Cys1235 with Cys1280. The interaction with host ganglioside GT1b stretch occupies residues 1252 to 1253; it reads FH. Positions 1264-1267 match the Host ganglioside-binding motif; interacts with GT1b motif; sequence SNWY.

The protein belongs to the peptidase M27 family. Heterodimer; disulfide-linked heterodimer of a light chain (LC) and heavy chain (HC). Interacts with glycosylated host synaptic vesicle glycoproteins SV2A, SV2B and SV2C which serve as coreceptors. Glycosylation of 'Asn-559' in SV2C contributes a 12-fold increase in affinity to this interaction. Depolarization of target tissue with high levels of K(+) leads to greater levels of receptor exposure. In vitro addition of gangliosides increases SV2-toxin interaction. Forms a highly interlocked heterodimer with NTNHA at pH 6.0 but not at pH 7.5 called the minimally functional progenitor toxin complex (M-PTC). The PTC is thought to protect toxin in the host acidic gastrointestinal tract, facilitate transcytosis across the intestinal barrier and release at neutral pH as is found in the bloodstream. Requires Zn(2+) as cofactor. In terms of processing, in a bacterial culture the precursor chain is initally cleaved on the amino side of Gly-445 and is processed more slowly between Lys-448 and Ala-449 to give the final mature heavy chain sequence. Post-translationally, has slow autocatalytic activity, cleaves 250-Tyr-Tyr-251, 266-Phe-Gly-267, 419-Phe-Thr-420, 423-Phe-Glu-424, 430-Cys-Val-431, 432-Arg-Gly-433, 438-Lys-Thr-439, and probably 429-Leu-Cys-430 over a period of 4 weeks. Catalysis of the '197-Gln-|-Arg-198' bond in SNAP25 is estimated to be 10(5) more efficient than autocatalysis, leaving the physiological importance of autocatalysis in doubt. Ubiquitinated by host HECD2. Deubiquitination by host VCPIP1 prevents degradation by the proteasome.

The protein resides in the secreted. The protein localises to the cell wall. It localises to the host synapse. Its subcellular location is the host presynaptic cell membrane. It is found in the host cytoplasm. The protein resides in the host cytosol. The protein localises to the host cytoplasmic vesicle. It localises to the host secretory vesicle. Its subcellular location is the host synaptic vesicle membrane. The catalysed reaction is Limited hydrolysis of proteins of the neuroexocytosis apparatus, synaptobrevins, SNAP25 or syntaxin. No detected action on small molecule substrates.. Toxin internalization is inhibited by azide or dinitrophenol or at 4 degrees Celsius. Dynamin (DNM) inhibitors abolish toxin uptake. Botulinum toxin causes flaccid paralysis by inhibiting neurotransmitter (acetylcholine) release from the presynaptic membranes of nerve terminals of the eukaryotic host skeletal and autonomic nervous system, with frequent heart or respiratory failure. Precursor of botulinum neurotoxin A which has 2 coreceptors; complex polysialylated gangliosides found on neural tissue and specific membrane-anchored proteins of synaptic vesicles. Receptor proteins are exposed on host presynaptic cell membrane during neurotransmitter release, when the toxin heavy chain (HC) binds to them. Upon synaptic vesicle recycling the toxin is taken up via the endocytic pathway. When the pH of the toxin-containing endosome drops a structural rearrangement occurs so that the N-terminus of the HC forms pores that allows the light chain (LC) to translocate into the cytosol. Once in the cytosol the disulfide bond linking the 2 subunits is reduced and LC cleaves its target protein on synaptic vesicles, preventing their fusion with the cytoplasmic membrane and thus neurotransmitter release. Toxin activity requires polysialylated gangliosides; GT1b supports activity better than GD1a. Binds to host peripheral neuronal presynaptic membranes via the synaptic vesicle glycoproteins SV2A, SV2B and SV2C. It binds directly to the largest lumenal (intravesicular) loop of SV2A, SV2B and SV2C that is transiently exposed outside of cells during exocytosis; gangliosides enhance binding. Recognizes an N-linked glycan on SV2 proteins. May also use FGFR3 as a receptor. Toxin uptake into neural cells requires stimulation (incubation with K(+) to stimulate receptor exposure) to be internalized by receptor-mediated endocytosis. Subsequently the toxin colocalizes with its receptor in host cells. Toxin uptake can be blocked by the appropriate SV2 protein fragments in cell culture. Functionally, has proteolytic activity. After translocation into the eukaryotic host cytosol LC hydrolyzes the '197-Gln-|-Arg-198' bond in SNAP25, blocking neurotransmitter release. Recognizes the '146-Met--Gly-155' region of SNAP25, which confers substrate specificity. Hydrolyzes the '202-Thr-|-Arg-203' bond of mouse SNAP23, but not in human which has a different sequence. Reduction of the interchain disulfide bond occurs in the host cytosol and probably prevents retrotranslocation into the synaptic vesicle. Has slow (occurs over 4 weeks) autocatalytic cleavage, however it is not clear if this is physiologically relevant. In terms of biological role, responsible for host epithelial cell transcytosis, host nerve cell targeting and translocation of botulinum neurotoxin A light chain (LC) into host cytosol. Composed of 3 subdomains; the translocation domain (TD), and N-terminus and C-terminus of the receptor-binding domain (RBD). The RBD is responsible for binding to host epithelial cells and transcytosis across them; this uses different receptors than those on nerve cells. RBD is also responsible for adherence of toxin to host nerve cell surface; HC alone prevents uptake of whole toxin by neural cells, and delays paralysis onset by 75%. Isolated RBD also delays paralysis onset. The N-terminus of the RBD binds to phosphatidylinositol, which might play a role in membrane-binding. Binds to host protein receptor synaptic vesicle glycoproteins SV2A, SV2B and SV2C via lumenal loop 4. Binding can be inhibited by protein fragments from either the HC or SV2C. Isolated HC significantly decreases uptake and toxicity of whole BoNT/A, but also interferes with uptake of BoNT/E and to a lesser extent BoNT/F. The RBD recognizes the N-linked glycan on 'Asn-559' of SV2A, SV2B and SV2C; hydrogen-bonding occurs via 10 well-defined water molecules and stacking of hydrophobic residues. Binds one host GT1b ganglioside, which serves as a coreceptor. Modeling shows the HC can bind both coreceptors (a ganglioside and SV2 protein) simultaneously at different sites. Crystals of the RBD with a GT1b analog can be grown at pH 5.5, indicating the toxin-ganglioside complex could be stable within the endosome. Isolated RBD binds NTNHA (a bacterial protein that protects toxin) with high affinity at pH 6.0 but not at pH 7.5. The N-terminal belt (residues 449-545) wraps around the perimeter of the LC, probably protecting Zn(2+) in the active site; it is not required for channel formation by the TD domain but may serve to prevent premature LC dissociation from the translocation channel and to protect toxin prior to translocation. The isolated TD forms transmembrane channels of about 15 Angstroms in the absence of a pH gradient; LC translocation requires a pH and redox gradient (pH 5.0/oxidizing in the cis compartment, pH 7.0/reducing in the trans compartment), LC does not unfold unless the cis pH is 6.0 or less. Pores are presumably made by 1-2 toxin molecules. While interaction with the RBD modulates the pH threshold for membrane insertion, the RBD is not essential for toxin degradation of SNAP25 in neural cells. This Clostridium botulinum protein is Botulinum neurotoxin type A.